The chain runs to 327 residues: tRNA dimethylallyltransferase (327 aa).

18–25 provides a ligand contact to ATP; it reads GPTASGKT. 20-25 serves as a coordination point for substrate; the sequence is TASGKT. Interaction with substrate tRNA regions lie at residues 43–46, 167–171, and 251–256; these read DSAL, QRVQR, and RCVGYR.

It belongs to the IPP transferase family. Monomer. Requires Mg(2+) as cofactor.

The catalysed reaction is adenosine(37) in tRNA + dimethylallyl diphosphate = N(6)-dimethylallyladenosine(37) in tRNA + diphosphate. In terms of biological role, catalyzes the transfer of a dimethylallyl group onto the adenine at position 37 in tRNAs that read codons beginning with uridine, leading to the formation of N6-(dimethylallyl)adenosine (i(6)A). In Methylibium petroleiphilum (strain ATCC BAA-1232 / LMG 22953 / PM1), this protein is tRNA dimethylallyltransferase.